The following is a 273-amino-acid chain: Tyrosinase (273 aa).

Positions 37, 53, 62, 189, 193, and 215 each coordinate Cu cation.

The protein belongs to the tyrosinase family. It depends on Cu(2+) as a cofactor.

The enzyme catalyses 2 L-dopa + O2 = 2 L-dopaquinone + 2 H2O. It carries out the reaction L-tyrosine + O2 = L-dopaquinone + H2O. Functionally, this is a copper-containing oxidase that functions in the formation of pigments such as melanins and other polyphenolic compounds. In Streptomyces lincolnensis, this protein is Tyrosinase (melC2).